A 471-amino-acid chain; its full sequence is Probable anion transporter 5, chloroplastic (471 aa).

The transit peptide at 1-59 (MAASASASALQAERCLLVGVGAGPRRHRLPLRMPPPLHAPPALLLLPHRRRRRWPPAVR) directs the protein to the chloroplast. The tract at residues 56–76 (PAVRASPGEGGGGGGGGGGGG) is disordered. 4 helical membrane-spanning segments follow: residues 62–82 (PGEG…AGAL), 103–123 (IGVV…GFMP), 162–182 (VVFG…PPII), and 185–205 (LGWE…CLGF). Positions 63–76 (GEGGGGGGGGGGGG) are enriched in gly residues. Residues 226–247 (GQSPSGSSDLISSSVSPKSSES) form a disordered region. The span at 228 to 247 (SPSGSSDLISSSVSPKSSES) shows a compositional bias: low complexity. The next 6 helical transmembrane spans lie at 270–290 (VWAM…CLSW), 307–327 (AWVS…AAPF), 348–368 (IAFL…GVPP), 371–391 (IVAF…GLYC), 403–423 (ILLG…VALT), and 435–455 (ISLF…WLAF).

It belongs to the major facilitator superfamily. Sodium/anion cotransporter (TC 2.A.1.14) family.

It is found in the plastid. Its subcellular location is the chloroplast membrane. Its function is as follows. Probable anion transporter. This chain is Probable anion transporter 5, chloroplastic (PHT4;5), found in Oryza sativa subsp. japonica (Rice).